The chain runs to 1017 residues: NLR family CARD domain-containing protein 4 (1017 aa).

Residues 1 to 88 (MNFIKENSQV…PLFQELHGLS (88 aa)) form the CARD domain. Residues 95-298 (EEDLDDLAQE…QFGALIAEVG (204 aa)) form a nucleotide-binding domain (NBD) region. In terms of domain architecture, NACHT spans 163–476 (SPCIIEGESG…VTKGNGHLQK (314 aa)). Residue 169-176 (GESGKGKS) participates in ATP binding. A winged-helix domain (WHD) region spans residues 356–463 (SHTQTTLFCT…RLSSLLTSGE (108 aa)). Ser533 bears the Phosphoserine mark. 12 LRR repeats span residues 578–598 (FFRGKSLYINSENIPDYLFDF), 649–672 (KQEFKTLDVTLRDFCKLSKKDIKY), 728–751 (VTNLQTLGVHDLQIQRLPGGLTDN), 755–778 (LKNLMKLILDNIQMNEEDALKLAE), 780–805 (LTNLKKMCLLRLTHLSDIGEGMDYIV), 817–840 (EIQLVSCCLSGNAVKTLAQNLHNL), 841–863 (ARLSILDLSENHLEKDGKEALQQ), 871–895 (LEQLTVLMLPWCGDVRVSLARLLEQ), 904–926 (KLGLKNWRLTDAEIRILGVFFEK), 929–956 (LENFQQLDLAGNCVSSDGWLAFMSGFEN), 958–978 (KELVFFDFSTKGLLPDASLVR), and 992–1014 (EVQLVGWQLDDDDVSVLKGAFKL).

In terms of assembly, homooligomer; homooligomerizes following activation of Naip proteins by pathogenic proteins such as S.typhimurium (Salmonella) flagellin or PrgJ. Component of the NLRC4 inflammasome, at least composed of NLRC4, caspase-1 (CASP1) and some NAIP family member. Interacts with EIF2AK2/PKR. Phosphorylated at Ser-533 following infection of macrophages with S.typhimurium (Salmonella). Phosphorylation is essential for NLRC4 inflammasome function to promote caspase-1 activation and pyroptosis. PRKCD phosphorylates Ser-533 in vitro.

The protein localises to the cytoplasm. The protein resides in the cytosol. Functionally, key component of inflammasomes that indirectly senses specific proteins from pathogenic bacteria and fungi and responds by assembling an inflammasome complex that promotes caspase-1 activation, cytokine production and macrophage pyroptosis. The NLRC4 inflammasome is activated as part of the innate immune response to a range of intracellular bacteria. This Bos taurus (Bovine) protein is NLR family CARD domain-containing protein 4 (NLRC4).